The sequence spans 123 residues: Insulin-like peptide-1 (123 aa).

Residues 1 to 24 (MTTSSYFLLVALGLLLYVCQSSFG) form the signal peptide. Intrachain disulfides connect cysteine 29/cysteine 106, cysteine 41/cysteine 109, cysteine 53/cysteine 122, and cysteine 108/cysteine 113. Proline 34 is subject to 4-hydroxyproline; partial. Residues 59–102 (EQGGANNARAYTGRTSSLMKRRGFLSLLKKRGKRDEGSLQRSGR) constitute a propeptide, c peptide. Glutamate 107 is modified (4-carboxyglutamate). Glutamate 117 is subject to 4-carboxyglutamate; partial.

It belongs to the insulin family. In terms of assembly, heterodimer of A and B chains; disulfide-linked. Expressed by the venom duct.

Its subcellular location is the secreted. Functionally, this venom insulin facilitates prey capture by rapidly inducing hypoglycemic shock. Intraperitoneal injection of this peptide into zebrafish lowers blood glucose with the same potency than human insulin. In vivo, when applied to water, this peptide reduces overall locomotor activity of zebrafish larvae, observed as a significant decrease in the percentage of time spent swimming and movement frequency. The protein is Insulin-like peptide-1 of Conus victoriae (Queen Victoria cone).